Consider the following 460-residue polypeptide: Argininosuccinate lyase (460 aa).

The protein belongs to the lyase 1 family. Argininosuccinate lyase subfamily.

The protein localises to the cytoplasm. The enzyme catalyses 2-(N(omega)-L-arginino)succinate = fumarate + L-arginine. It functions in the pathway amino-acid biosynthesis; L-arginine biosynthesis; L-arginine from L-ornithine and carbamoyl phosphate: step 3/3. This chain is Argininosuccinate lyase, found in Campylobacter jejuni subsp. doylei (strain ATCC BAA-1458 / RM4099 / 269.97).